The sequence spans 248 residues: Agamous-like MADS-box protein AGL1 (248 aa).

The MADS-box domain occupies 18-72 (RGKIEIKRIENTTNRQVTFCKRRNGLLKKAYELSVLCDAEVALVIFSTRGRLYEY). In terms of domain architecture, K-box spans 102–192 (TQYYQQEASK…RAKIAEGARL (91 aa)).

As to quaternary structure, interacts with AGL15 and AGL16.

It localises to the nucleus. Its function is as follows. Probable transcription factor. Interacts genetically with TT16/AGL32 in a partially antagonistic manner during flower development. Is essential for the coordination of cell divisions in ovule, seed coat development and endosperm formation. This is Agamous-like MADS-box protein AGL1 (AGL1) from Arabidopsis thaliana (Mouse-ear cress).